A 920-amino-acid polypeptide reads, in one-letter code: Probable helicase HelY (920 aa).

A Helicase ATP-binding domain is found at 26-184 (CAALERGHGV…WVQTVRGDTT (159 aa)). Position 39–46 (39–46 (APTGAGKT)) interacts with ATP. Residues 132–135 (DEVH) carry the DEVH box motif. The Helicase C-terminal domain maps to 265–469 (EVIAILDAEG…SYNMTINLVH (205 aa)).

Belongs to the helicase family. SKI2 subfamily.

In Mycobacterium leprae (strain TN), this protein is Probable helicase HelY (helY).